We begin with the raw amino-acid sequence, 196 residues long: Elongation factor Ts (196 aa).

Residues 80-83 (TDFV) form an involved in Mg(2+) ion dislocation from EF-Tu region.

Belongs to the EF-Ts family.

Its subcellular location is the cytoplasm. Functionally, associates with the EF-Tu.GDP complex and induces the exchange of GDP to GTP. It remains bound to the aminoacyl-tRNA.EF-Tu.GTP complex up to the GTP hydrolysis stage on the ribosome. In Thermus thermophilus (strain ATCC BAA-163 / DSM 7039 / HB27), this protein is Elongation factor Ts.